The chain runs to 126 residues: Fluoride-specific ion channel FluC 2 (126 aa).

The next 4 helical transmembrane spans lie at 11–31 (IFLIGAGGFLGAICRFSLCEL), 43–63 (VLGSFMLGLIMYDTEYIGFIG), 69–89 (AFGTGFMGAFTTFSTFAVQSF), and 93–113 (FFPALENISVNLFLALVGVFM). Gly76 and Thr79 together coordinate Na(+).

This sequence belongs to the fluoride channel Fluc/FEX (TC 1.A.43) family.

It is found in the cell membrane. It carries out the reaction fluoride(in) = fluoride(out). Na(+) is not transported, but it plays an essential structural role and its presence is essential for fluoride channel function. Its function is as follows. Fluoride-specific ion channel. Important for reducing fluoride concentration in the cell, thus reducing its toxicity. This Methanosarcina barkeri (strain Fusaro / DSM 804) protein is Fluoride-specific ion channel FluC 2.